The sequence spans 626 residues: Dual specificity testis-specific protein kinase 1 (626 aa).

Positions 1-41 are disordered; sequence MAGERPPLRGPGPGPGEVPGEGPPGPGGTGGGPGRGRPSSY. Pro residues predominate over residues 8–26; sequence LRGPGPGPGEVPGEGPPGP. The region spanning 57-314 is the Protein kinase domain; that stretch reads FHCAEKIGAG…TEITQHLEWI (258 aa). Residues 63–71 and Lys86 contribute to the ATP site; that span reads IGAGFFSEV. Asp175 acts as the Proton acceptor in catalysis. Ser220 is modified (phosphoserine; by autocatalysis). 3 disordered regions span residues 331-373, 423-488, and 529-564; these read HNQG…NWGD, ETLV…QLPL, and WAGEPWNRAQHSLPRAAALERTEPSPPPSAPREPDE. Omega-N-methylarginine is present on Arg338. Residues 348-357 show a composition bias toward basic and acidic residues; sequence PDPRLSRSRS. The interval 419–524 is required for interaction with YWHAB; the sequence is VTTPETLVQP…NNNPPAVVVN (106 aa). Over residues 476-485 the composition is skewed to pro residues; sequence EPEPPGPAPQ. Residues 527–624 are required for interaction with PARVA; that stretch reads QGWAGEPWNR…PTPSLQLPGA (98 aa). The segment at 527-626 is required for interaction with SPRED1 and SPRY2. Required for TESK1-mediated dephosphorylation of SPRY2 and SPRY2 inhibition of ERK phosphorylation; that stretch reads QGWAGEPWNR…PSLQLPGARS (100 aa).

This sequence belongs to the protein kinase superfamily. TKL Ser/Thr protein kinase family. As to quaternary structure, interacts (via both C- and N-termini) with SPRY4 (via C-terminus); the interaction inhibits TESK1 kinase activity. Interacts with TAOK1; the interaction inhibits TAOK1 kinase activity. Interacts (via C-terminus) with SPRED1 (via C-terminus); the interaction inhibits TESK1 kinase activity. Interacts (via C-terminus) with PARVA/PARVIN (via C-terminus); the interaction inhibits TESK1 kinase activity. Interacts with YWHAB/14-3-3 beta; the interaction is dependent on the phosphorylation of TESK1 Ser-437 and inhibits TESK1 kinase activity. Interacts with SPRY1, SPRY3 and SPRED2. Interacts (via C-terminus) with SPRY2 (via C-terminus); the interaction disrupts SPRY2 interaction with PPP2CA/PP2A-C, possibly by vesicular sequestration of SPRY2. Therefore dephosphorylation of SPRY2 by the serine/threonine-protein phosphatase 2A (PP2A) holoenzyme is lost, inhibiting its interaction with GRB2. Mg(2+) serves as cofactor. Requires Mn(2+) as cofactor. In terms of processing, autophosphorylated on serine and tyrosine residues. As to expression, expressed in podocytes and renal tubular cells in the kidney (at protein level).

The protein resides in the cytoplasm. Its subcellular location is the perinuclear region. It localises to the cytoskeleton. It is found in the microtubule organizing center. The protein localises to the centrosome. The protein resides in the cell projection. Its subcellular location is the lamellipodium. The enzyme catalyses L-seryl-[protein] + ATP = O-phospho-L-seryl-[protein] + ADP + H(+). It carries out the reaction L-threonyl-[protein] + ATP = O-phospho-L-threonyl-[protein] + ADP + H(+). The catalysed reaction is L-tyrosyl-[protein] + ATP = O-phospho-L-tyrosyl-[protein] + ADP + H(+). Activated by autophosphorylation on Ser-220. Kinase activity is inhibited by SPRED1. Its function is as follows. Dual specificity protein kinase activity catalyzing autophosphorylation and phosphorylation of exogenous substrates on both serine/threonine and tyrosine residues. Regulates the cellular cytoskeleton by enhancing actin stress fiber formation via phosphorylation of cofilin and by preventing microtubule breakdown via inhibition of TAOK1/MARKK kinase activity. Inhibits podocyte motility via regulation of actin cytoskeletal dynamics and phosphorylation of CFL1. Positively regulates integrin-mediated cell spreading, via phosphorylation of cofilin. Suppresses ciliogenesis via multiple pathways; phosphorylation of CFL1, suppression of ciliary vesicle directional trafficking to the ciliary base, and by facilitating YAP1 nuclear localization where it acts as a transcriptional corepressor of the TEAD4 target genes AURKA and PLK1. Probably plays a central role at and after the meiotic phase of spermatogenesis. The chain is Dual specificity testis-specific protein kinase 1 (TESK1) from Homo sapiens (Human).